A 151-amino-acid polypeptide reads, in one-letter code: IFN signaling evasion protein OPG029 (151 aa).

Belongs to the orthopoxvirus OPG029 family. In terms of assembly, interacts with host TANK, TBKBP1 and AZI2; these interactions prevent interferon production. Interacts with host STAT2.

In terms of biological role, prevents establishment of cellular antiviral state by blocking virus-induced phosphorylation and activation of interferon regulatory factors 3/IRF3 and 7/IRF7, transcription factors critical for the induction of interferons alpha and beta. This blockage is produced through the inhibition of host TBK1, by binding host TBK1 adapter proteins TBKBP1 and AZI2, thereby producing a strong inhibition of the phosphorylation and activation of IRF3 and IRF7. Also acts as an inhibitor of the cellular response to type I IFN by interacting with host STAT2. Mechanistically, exerts its inhibitory effect after host ISGF3 complex (composed of STAT1, STAT2 and IRF9) binding to the interferon stimulated response element (ISRE). The polypeptide is IFN signaling evasion protein OPG029 (OPG029) (Vaccinia virus (strain Western Reserve) (VACV)).